The sequence spans 100 residues: Putative antiporter subunit mnhF2 (100 aa).

3 helical membrane passes run 6-26 (TNFFITSALVLFGIAFIIGLF), 38-58 (VVAFDASSAVIMCIIGIVSVI), and 62-82 (VSFLDSIMLVAIISFVSSVSI).

This sequence belongs to the CPA3 antiporters (TC 2.A.63) subunit F family. In terms of assembly, may form a heterooligomeric complex that consists of seven subunits: mnhA2, mnhB2, mnhC2, mnhD2, mnhE2, mnhF2 and mnhG2.

Its subcellular location is the cell membrane. The sequence is that of Putative antiporter subunit mnhF2 (mnhF2) from Staphylococcus haemolyticus (strain JCSC1435).